Consider the following 354-residue polypeptide: Thiamine thiazole synthase 1, chloroplastic (354 aa).

The transit peptide at 1–45 directs the protein to the chloroplast; it reads MATAAASSLLKSSFAGSRLPAATRTTPASLVVATGPRGAGAGPIC. Substrate contacts are provided by residues A100, 120-121, G128, and V193; that span reads EQ. C222 bears the 2,3-didehydroalanine (Cys) mark. Substrate-binding positions include D224, H239, M291, and 301-303; that span reads RMG.

It belongs to the THI4 family. Homooctamer. Fe cation serves as cofactor. Post-translationally, during the catalytic reaction, a sulfide is transferred from Cys-222 to a reaction intermediate, generating a dehydroalanine residue. As to expression, highest expression in developing embryos and green leaves and a very low level expression seen in endosperm, roots, etiolated shoots and immature ears.

The protein localises to the plastid. It localises to the chloroplast. It catalyses the reaction [ADP-thiazole synthase]-L-cysteine + glycine + NAD(+) = [ADP-thiazole synthase]-dehydroalanine + ADP-5-ethyl-4-methylthiazole-2-carboxylate + nicotinamide + 3 H2O + 2 H(+). Functionally, involved in biosynthesis of the thiamine precursor thiazole. Catalyzes the conversion of NAD and glycine to adenosine diphosphate 5-(2-hydroxyethyl)-4-methylthiazole-2-carboxylic acid (ADT), an adenylated thiazole intermediate. The reaction includes an iron-dependent sulfide transfer from a conserved cysteine residue of the protein to a thiazole intermediate. The enzyme can only undergo a single turnover, which suggests it is a suicide enzyme. May have additional roles in adaptation to various stress conditions and in DNA damage tolerance. In Zea mays (Maize), this protein is Thiamine thiazole synthase 1, chloroplastic.